The following is a 439-amino-acid chain: Membrane sensor protein UhpC (439 aa).

The Cytoplasmic portion of the chain corresponds to 1 to 25; sequence MLPFLKAPADAPLMTDKYEIDARYR. Residues 26–45 traverse the membrane as a helical segment; that stretch reads YWRRHILLTIWLGYALFYFT. Topologically, residues 46-66 are periplasmic; it reads RKSFNAAVPEILANGVLSRSD. A helical transmembrane segment spans residues 67-87; the sequence is IGLLATLFYITYGVSKFVSGI. Over 88-95 the chain is Cytoplasmic; it reads VSDRSNAR. The helical transmembrane segment at 96 to 118 threads the bilayer; it reads YFMGIGLIATGIINILFGFSTSL. Topologically, residues 119–121 are periplasmic; it reads WAF. Residues 122–144 traverse the membrane as a helical segment; the sequence is AVLWVLNAFFQGWGSPVCARLLT. Residues 145 to 162 lie on the Cytoplasmic side of the membrane; it reads AWYSRTERGGWWALWNTA. A helical membrane pass occupies residues 163 to 183; it reads HNVGGALIPIVMAAAALHYGW. A topological domain (periplasmic) is located at residue arginine 184. The chain crosses the membrane as a helical span at residues 185 to 205; that stretch reads AGMMIAGCMAIVVGIFLCWRL. Residues 206–244 are Cytoplasmic-facing; it reads RDRPQALGLPAVGEWRHDALEIAQQQEGAGLTRKEILTK. A helical transmembrane segment spans residues 245-265; the sequence is YVLLNPYIWLLSFCYVLVYVV. Over 266–289 the chain is Periplasmic; it reads RAAINDWGNLYMSETLGVDLVTAN. The chain crosses the membrane as a helical span at residues 290–310; that stretch reads TAVTMFELGGFIGALVAGWGS. The Cytoplasmic portion of the chain corresponds to 311 to 322; sequence DKLFNGNRGPMN. A helical transmembrane segment spans residues 323 to 343; that stretch reads LIFAAGILLSVGSLWLMPFAS. At 344-349 the chain is on the periplasmic side; the sequence is YVMQAT. Residues 350 to 370 form a helical membrane-spanning segment; sequence CFFTIGFFVFGPQMLIGMAAA. At 371–379 the chain is on the cytoplasmic side; the sequence is ECSHKEAAG. Residues 380 to 400 traverse the membrane as a helical segment; the sequence is AATGFVGLFAYLGASLAGWPL. Residues 401–410 are Periplasmic-facing; it reads AKVLDTWHWS. Residues 411–431 traverse the membrane as a helical segment; the sequence is GFFVVISIAAGISALLLLPFL. At 432–439 the chain is on the cytoplasmic side; that stretch reads NAQTPREA.

This sequence belongs to the major facilitator superfamily. Organophosphate:Pi antiporter (OPA) (TC 2.A.1.4) family.

The protein resides in the cell inner membrane. Its function is as follows. Part of the UhpABC signaling cascade that controls the expression of the hexose phosphate transporter UhpT. UhpC senses external glucose-6-phosphate and interacts with the histidine kinase UhpB, leading to the stimulation of the autokinase activity of UhpB. The chain is Membrane sensor protein UhpC from Escherichia coli (strain K12).